The sequence spans 136 residues: Aspartate 1-decarboxylase (136 aa).

Ser25 (schiff-base intermediate with substrate; via pyruvic acid) is an active-site residue. Ser25 carries the pyruvic acid (Ser) modification. A substrate-binding site is contributed by Thr57. The active-site Proton donor is the Tyr58. Residue 73–75 (GAA) coordinates substrate.

It belongs to the PanD family. In terms of assembly, heterooctamer of four alpha and four beta subunits. The cofactor is pyruvate. In terms of processing, is synthesized initially as an inactive proenzyme, which is activated by self-cleavage at a specific serine bond to produce a beta-subunit with a hydroxyl group at its C-terminus and an alpha-subunit with a pyruvoyl group at its N-terminus.

It is found in the cytoplasm. It carries out the reaction L-aspartate + H(+) = beta-alanine + CO2. Its pathway is cofactor biosynthesis; (R)-pantothenate biosynthesis; beta-alanine from L-aspartate: step 1/1. Functionally, catalyzes the pyruvoyl-dependent decarboxylation of aspartate to produce beta-alanine. The protein is Aspartate 1-decarboxylase of Mycolicibacterium smegmatis (strain ATCC 700084 / mc(2)155) (Mycobacterium smegmatis).